A 50-amino-acid chain; its full sequence is Protease inhibitor 2 (50 aa).

Residues 2–50 enclose the Kazal-like domain; that stretch reads EDCVGRKACTREWYPVCGSDGVTYSNPCNFSAQQEQCDPNITIAHMGEC. 2 cysteine pairs are disulfide-bonded: cysteine 10–cysteine 29 and cysteine 18–cysteine 50. 2 N-linked (GlcNAc...) asparagine glycosylation sites follow: asparagine 30 and asparagine 41.

Serine protease inhibitor. Strongly inhibits human neutrophil elastase and trypsin, also inhibits porcine pancreatic elastase and subtilisin A. Does not inhibit chymotrypsin, plasma kallikrein, pancreatic kallikrein, thrombin or papain. The protein is Protease inhibitor 2 of Cenchritis muricatus (Beaded periwinkle).